A 133-amino-acid polypeptide reads, in one-letter code: Transcription antitermination protein NusB (133 aa).

This sequence belongs to the NusB family.

Functionally, involved in transcription antitermination. Required for transcription of ribosomal RNA (rRNA) genes. Binds specifically to the boxA antiterminator sequence of the ribosomal RNA (rrn) operons. The chain is Transcription antitermination protein NusB from Shewanella denitrificans (strain OS217 / ATCC BAA-1090 / DSM 15013).